The sequence spans 315 residues: Small ribosomal subunit protein uS2 (315 aa).

Positions 250–315 (LLEQGDAAKA…TESEKAPVSE (66 aa)) are disordered. 2 stretches are compositionally biased toward basic and acidic residues: residues 272–282 (VSAKNEAKSED) and 297–315 (TEAKIEAEATESEKAPVSE).

The protein belongs to the universal ribosomal protein uS2 family.

The polypeptide is Small ribosomal subunit protein uS2 (Clavibacter michiganensis subsp. michiganensis (strain NCPPB 382)).